A 165-amino-acid chain; its full sequence is Calcium-binding protein H (165 aa).

EF-hand domains lie at 7–42, 43–78, 88–123, and 124–159; these read QIEK…MGSK, YPEK…RYQD, YFQD…IGSD, and HPKE…TIRS. Ca(2+) contacts are provided by D20, D22, N24, E26, E31, D56, D58, E60, K62, E67, D101, N103, D105, R107, E112, D137, N139, D141, Y143, and E148.

The polypeptide is Calcium-binding protein H (cbpH) (Dictyostelium discoideum (Social amoeba)).